An 86-amino-acid polypeptide reads, in one-letter code: Large ribosomal subunit protein uL23 (86 aa).

The protein belongs to the universal ribosomal protein uL23 family. As to quaternary structure, part of the 50S ribosomal subunit. Contacts protein L29.

Functionally, binds to 23S rRNA. One of the proteins that surrounds the polypeptide exit tunnel on the outside of the ribosome. This is Large ribosomal subunit protein uL23 from Methanothermobacter thermautotrophicus (strain ATCC 29096 / DSM 1053 / JCM 10044 / NBRC 100330 / Delta H) (Methanobacterium thermoautotrophicum).